Consider the following 131-residue polypeptide: UPF0251 protein MMP0619 (131 aa).

This sequence belongs to the UPF0251 family.

The protein is UPF0251 protein MMP0619 of Methanococcus maripaludis (strain DSM 14266 / JCM 13030 / NBRC 101832 / S2 / LL).